The primary structure comprises 102 residues: MRSIFYFALAFAALTCSNASAALPNPDETRLLSDTFTKRSLRVAGQEAARGEEIVRVTAQSTNKIFKRPAEKDMSKLIAAAKKALLEKKMAKLSKVIKKPAK.

The first 21 residues, 1 to 21, serve as a signal peptide directing secretion; sequence MRSIFYFALAFAALTCSNASA. Positions 39 to 53 match the RxLR-dEER motif; that stretch reads RSLRVAGQEAARGEE.

It belongs to the RxLR effector family. As to quaternary structure, interacts with host KRBP1.

It localises to the secreted. The protein resides in the host cytoplasm. The protein localises to the host nucleus. It is found in the host nucleolus. In terms of biological role, effector that enhances P.infestans colonization of host plant leaves. During the early stages of P.infestans infection, interacts with and stabilizes host potato K-homology (KH) RNA-binding protein KRBP1, leading to its accumulation. This Phytophthora infestans (strain T30-4) (Potato late blight agent) protein is RxLR effector protein PexRD41.